The primary structure comprises 119 residues: Protein Wnt-4 (119 aa).

Residue Ser1 is the site of O-palmitoleoyl serine; by PORCN attachment. 2 disulfides stabilise this stretch: Cys69–Cys100 and Cys85–Cys95. The N-linked (GlcNAc...) asparagine glycan is linked to Asn86.

It belongs to the Wnt family. Post-translationally, palmitoleoylation is required for efficient binding to frizzled receptors. Depalmitoleoylation leads to Wnt signaling pathway inhibition.

It localises to the secreted. It is found in the extracellular space. Its subcellular location is the extracellular matrix. Its function is as follows. Ligand for members of the frizzled family of seven transmembrane receptors. Plays an important role in embryonic development. The protein is Protein Wnt-4 (WNT-4) of Plethodon jordani (Red-cheeked salamander).